The sequence spans 110 residues: Iron-sulfur cluster assembly protein CyaY (110 aa).

This sequence belongs to the frataxin family.

Functionally, involved in iron-sulfur (Fe-S) cluster assembly. May act as a regulator of Fe-S biogenesis. This chain is Iron-sulfur cluster assembly protein CyaY, found in Pseudomonas putida (strain GB-1).